The sequence spans 98 residues: C-X-C motif chemokine 10 (98 aa).

The N-terminal stretch at 1–21 (MNQTAILICCLIFLTLSGIQG) is a signal peptide. Residue Arg26 is modified to Citrulline; by PAD2. Disulfide bonds link Cys30/Cys57 and Cys32/Cys74.

This sequence belongs to the intercrine alpha (chemokine CxC) family. In terms of assembly, monomer, dimer, and tetramer. Interacts with CXCR3 (via N-terminus). In terms of processing, several proteases can mediate post-secretion cleavages. DPP4 cleaves CXCL10 on its N-terminal 2 amino acids leading to an antagonist form of CXCL10. This dominant negative form is capable of binding CXCR3 but does not induce signaling. MMP9 cleaves 9 amino acids instead. Mainly secreted by monocytes, endothelial cells as well as fibroblasts. Expressed by epithelial cells in thymus. Microglial cells produce CXCL10 in response to viral stimulation.

It localises to the secreted. In terms of biological role, pro-inflammatory cytokine that is involved in a wide variety of processes such as chemotaxis, differentiation, and activation of peripheral immune cells, regulation of cell growth, apoptosis and modulation of angiostatic effects. Plays thereby an important role during viral infections by stimulating the activation and migration of immune cells to the infected sites. Mechanistically, binding of CXCL10 to the CXCR3 receptor activates G protein-mediated signaling and results in downstream activation of phospholipase C-dependent pathway, an increase in intracellular calcium production and actin reorganization. In turn, recruitment of activated Th1 lymphocytes occurs at sites of inflammation. Activation of the CXCL10/CXCR3 axis also plays an important role in neurons in response to brain injury for activating microglia, the resident macrophage population of the central nervous system, and directing them to the lesion site. This recruitment is an essential element for neuronal reorganization. This is C-X-C motif chemokine 10 (CXCL10) from Homo sapiens (Human).